A 158-amino-acid polypeptide reads, in one-letter code: Ribosome maturation factor RimP (158 aa).

It belongs to the RimP family.

The protein resides in the cytoplasm. Required for maturation of 30S ribosomal subunits. The sequence is that of Ribosome maturation factor RimP from Pseudomonas putida (strain ATCC 47054 / DSM 6125 / CFBP 8728 / NCIMB 11950 / KT2440).